A 311-amino-acid chain; its full sequence is Olfactory receptor 5L1 (311 aa).

At 1 to 25 the chain is on the extracellular side; that stretch reads MGKENCTTVAEFILLGLSDVPELRV. Residue N5 is glycosylated (N-linked (GlcNAc...) asparagine). Residues 26 to 46 form a helical membrane-spanning segment; that stretch reads CLFLLFLLIYGVTLLANLGMI. Over 47-54 the chain is Cytoplasmic; sequence ALIQVSSR. A helical transmembrane segment spans residues 55 to 75; that stretch reads LHTPMYFFLSHLSSVDFCYSS. The Extracellular segment spans residues 76–99; sequence IIVPKMLANIFNKDKAISFLGCMV. A disulfide bond links C97 and C189. Residues 100 to 120 traverse the membrane as a helical segment; that stretch reads QFYLFCTCVVTEVFLLAVMAY. Over 121–139 the chain is Cytoplasmic; it reads DRFVAICNPLLYTVTMSWK. Residues 140–160 form a helical membrane-spanning segment; that stretch reads VRVELASCCYFCGTVCSLIHL. At 161–196 the chain is on the extracellular side; sequence CLALRIPFYRSNVINHFFCDLPPVLSLACSDITVNE. An N-linked (GlcNAc...) asparagine glycan is attached at N195. The helical transmembrane segment at 197–217 threads the bilayer; it reads TLLFLVATLNESVTIMIILTS. Residues 218-237 are Cytoplasmic-facing; sequence YLLILTTILKMGSAEGRHKA. Residues 238-258 form a helical membrane-spanning segment; it reads FSTCASHLTAITVFHGTVLSI. Residues 259 to 271 lie on the Extracellular side of the membrane; it reads YCRPSSGNSGDAD. A helical membrane pass occupies residues 272-292; sequence KVATVFYTVVIPMLNSVIYSL. At 293–311 the chain is on the cytoplasmic side; it reads RNKDVKEALRKVMGSKIHS.

This sequence belongs to the G-protein coupled receptor 1 family.

The protein resides in the cell membrane. Its function is as follows. Odorant receptor. The protein is Olfactory receptor 5L1 (OR5L1) of Homo sapiens (Human).